The chain runs to 162 residues: UPF0260 protein Caul_3920 (162 aa).

Belongs to the UPF0260 family.

The sequence is that of UPF0260 protein Caul_3920 from Caulobacter sp. (strain K31).